Reading from the N-terminus, the 1410-residue chain is Pogo transposable element with ZNF domain (1410 aa).

The disordered stretch occupies residues 238 to 291 (RSTVPQSQSQQTKSTPSTSTTPTATQPTSLGQLAVQSPGQSNQTTNPKLAPSFP). Low complexity predominate over residues 239–266 (STVPQSQSQQTKSTPSTSTTPTATQPTS). The span at 267–284 (LGQLAVQSPGQSNQTTNP) shows a compositional bias: polar residues. K319 participates in a covalent cross-link: Glycyl lysine isopeptide (Lys-Gly) (interchain with G-Cter in SUMO2). The segment at 332 to 361 (QSPGPVVVSNNSSAHGSQRTSGPESSMKVT) is disordered. Residue S333 is modified to Phosphoserine. The span at 345–361 (AHGSQRTSGPESSMKVT) shows a compositional bias: polar residues. A Glycyl lysine isopeptide (Lys-Gly) (interchain with G-Cter in SUMO2) cross-link involves residue K359. Phosphoserine is present on S363. Residues 375 to 397 (KICPRCNAQFRVTEALRGHMCYC) form a C2H2-type 1; atypical zinc finger. The segment at 409–456 (KSLDSEPSVPSAAKPPSPEKTAPVASTPSSTPIPALSPPTKVPEPNEN) is disordered. A Glycyl lysine isopeptide (Lys-Gly) (interchain with G-Cter in SUMO2) cross-link involves residue K422. Residue S425 is modified to Phosphoserine. T439 carries the post-translational modification Phosphothreonine. S445 bears the Phosphoserine mark. K449 is covalently cross-linked (Glycyl lysine isopeptide (Lys-Gly) (interchain with G-Cter in SUMO2)). T463 is subject to Phosphothreonine. Residue K489 forms a Glycyl lysine isopeptide (Lys-Gly) (interchain with G-Cter in SUMO2) linkage. 6 consecutive C2H2-type zinc fingers follow at residues 494 to 516 (FRCP…MKHH), 530 to 553 (TICQ…ENVH), 560 to 583 (TKCK…KDTH), 590 to 613 (YVCQ…RMIH), 619 to 641 (LLCP…YMRH), and 647 to 670 (YHCN…LQHH). A Glycyl lysine isopeptide (Lys-Gly) (interchain with G-Cter in SUMO2) cross-link involves residue K629. K677 is covalently cross-linked (Glycyl lysine isopeptide (Lys-Gly) (interchain with G-Cter in SUMO2)). Residues 693 to 715 (SRGQPRTVPVSSNDTPPSALQEA) are disordered. Residues 701 to 710 (PVSSNDTPPS) are compositionally biased toward polar residues. The C2H2-type 8 zinc finger occupies 771 to 794 (VHCSLCRYSTCCSRAYANHMINNH). K801 is covalently cross-linked (Glycyl lysine isopeptide (Lys-Gly) (interchain with G-Cter in SUMO2)). The segment at 810 to 850 (VSGIKLACTSCTFVTSVGDAMAKHLVFNPSHRSSSILPRGL) is required for interaction with CBX5. The C2H2-type 9 zinc-finger motif lies at 815–840 (LACTSCTFVTSVGDAMAKHLVFNPSH). S856 is modified (phosphoserine). Disordered regions lie at residues 857–927 (RHGQ…PQAL) and 942–969 (VDDQ…GVGK). A compositionally biased stretch (basic and acidic residues) spans 860-870 (QTRDRVHDRNV). A Glycyl lysine isopeptide (Lys-Gly) (interchain with G-Cter in SUMO2) cross-link involves residue K883. Residues 892-915 (ATPAEPEELLTPLAPALPSPASTA) are compositionally biased toward low complexity. The HTH CENPB-type domain maps to 1015 to 1085 (GENLEGKYLS…MLRHHLTPHA (71 aa)). One can recognise a DDE-1 domain in the interval 1117-1323 (LPLSMIVAID…DCPELVQRSF (207 aa)). S1338 is subject to Phosphoserine. A coiled-coil region spans residues 1340 to 1360 (TRNADMQEELIASLEEQLKLS). The segment at 1360–1400 (SGEHSESSTPRPRSSPEETIEPESLHQLFEGESETESFYGF) is disordered. 2 positions are modified to phosphoserine: S1364 and S1367. T1368 carries the phosphothreonine modification. S1373 and S1374 each carry phosphoserine. T1378 bears the Phosphothreonine mark. Positions 1380 to 1404 (EPESLHQLFEGESETESFYGFEEAD) match the Integrase domain-binding motif (IBM) motif. The residue at position 1392 (S1392) is a Phosphoserine; by CK2. T1394 carries the post-translational modification Phosphothreonine. At S1396 the chain carries Phosphoserine; by CK2.

Interacts with CBX1, CBX3, MAD2L2 and CHAMP1. Interacts with CBX5; POGZ competes with PXVXL motif-containing proteins such as INCENP and TRIM28 for interaction with CBX5. Interacts (via IBM motif) with PSIP1 isoform 1 (via IBD domain); phosphorylation increases its affinity for PSIP1. Interacts with HDGFL2. Phosphorylation increases its interaction with PSIP1.

The protein localises to the nucleus. Its subcellular location is the chromosome. It localises to the cytoplasm. Its function is as follows. Plays a role in mitotic cell cycle progression and is involved in kinetochore assembly and mitotic sister chromatid cohesion. Probably through its association with CBX5 plays a role in mitotic chromosome segregation by regulating aurora kinase B/AURKB activation and AURKB and CBX5 dissociation from chromosome arms. Promotes the repair of DNA double-strand breaks through the homologous recombination pathway. This Homo sapiens (Human) protein is Pogo transposable element with ZNF domain (POGZ).